The chain runs to 240 residues: Tumor protein p53-inducible nuclear protein 1 (240 aa).

The LIR motif lies at 25–37; sequence EKEDDEWILVDFI.

As to quaternary structure, interacts with p53/TP53 and HIPK2. Interacts with PRKCG, GABARAP, GABARAPL1, GABARAPL2, MAP1LC3A, MAP1LC3B and MAP1LC3C. As to expression, ubiquitously expressed.

It is found in the cytoplasm. The protein resides in the cytosol. It localises to the nucleus. Its subcellular location is the PML body. The protein localises to the cytoplasmic vesicle. It is found in the autophagosome. Its function is as follows. Antiproliferative and proapoptotic protein involved in cell stress response which acts as a dual regulator of transcription and autophagy. Acts as a positive regulator of autophagy. In response to cellular stress or activation of autophagy, relocates to autophagosomes where it interacts with autophagosome-associated proteins GABARAP, GABARAPL1/L2, MAP1LC3A/B/C and regulates autophagy. Acts as an antioxidant and plays a major role in p53/TP53-driven oxidative stress response. Possesses both a p53/TP53-independent intracellular reactive oxygen species (ROS) regulatory function and a p53/TP53-dependent transcription regulatory function. Positively regulates p53/TP53 and p73/TP73 and stimulates their capacity to induce apoptosis and regulate cell cycle. In response to double-strand DNA breaks, promotes p53/TP53 phosphorylation on 'Ser-46' and subsequent apoptosis. Acts as a tumor suppressor by inducing cell death by an autophagy and caspase-dependent mechanism. Can reduce cell migration by regulating the expression of SPARC. The polypeptide is Tumor protein p53-inducible nuclear protein 1 (TP53INP1) (Homo sapiens (Human)).